The primary structure comprises 302 residues: Phospho-N-acetylmuramoyl-pentapeptide-transferase (302 aa).

The next 9 helical transmembrane spans lie at 1-21, 42-62, 68-88, 123-143, 154-174, 178-198, 204-224, 229-249, and 279-299; these read MIAANFLLNLFLYPILIKLFR, GTPTMGGILFVLTGFLFGMIS, VLLGMFLFFLIGFLDDFLSVV, FFGFTIEMGKWYYLFALLVIV, GLDGLAGWIYVSGSIPYWFFL, GVSEDILLILGAGVLAFLVFN, IFMGDTGSITLGGVLGTVSVL, FYLVLFFLIPVIETLSVILQV, and IVAVFTVFNLISSLVVLEIFG.

This sequence belongs to the glycosyltransferase 4 family. MraY subfamily. Mg(2+) is required as a cofactor.

The protein resides in the cell inner membrane. It catalyses the reaction UDP-N-acetyl-alpha-D-muramoyl-L-alanyl-gamma-D-glutamyl-meso-2,6-diaminopimeloyl-D-alanyl-D-alanine + di-trans,octa-cis-undecaprenyl phosphate = di-trans,octa-cis-undecaprenyl diphospho-N-acetyl-alpha-D-muramoyl-L-alanyl-D-glutamyl-meso-2,6-diaminopimeloyl-D-alanyl-D-alanine + UMP. It functions in the pathway cell wall biogenesis; peptidoglycan biosynthesis. In terms of biological role, catalyzes the initial step of the lipid cycle reactions in the biosynthesis of the cell wall peptidoglycan: transfers peptidoglycan precursor phospho-MurNAc-pentapeptide from UDP-MurNAc-pentapeptide onto the lipid carrier undecaprenyl phosphate, yielding undecaprenyl-pyrophosphoryl-MurNAc-pentapeptide, known as lipid I. The protein is Phospho-N-acetylmuramoyl-pentapeptide-transferase of Thermotoga petrophila (strain ATCC BAA-488 / DSM 13995 / JCM 10881 / RKU-1).